The sequence spans 110 residues: Flagellar hook-basal body complex protein FliE (110 aa).

The protein belongs to the FliE family.

Its subcellular location is the bacterial flagellum basal body. This Ralstonia nicotianae (strain ATCC BAA-1114 / GMI1000) (Ralstonia solanacearum) protein is Flagellar hook-basal body complex protein FliE.